We begin with the raw amino-acid sequence, 273 residues long: Transmembrane protein 202 (273 aa).

4 consecutive transmembrane segments (helical) span residues 53–75 (HIYI…IAMS), 121–141 (FFLI…SSWI), 155–175 (VSML…LFVA), and 189–209 (LLWT…AGII). The tract at residues 242 to 273 (TTVSPAKDEGPRSEMESLSVREKNLPKSGLWW) is disordered. The span at 247–266 (AKDEGPRSEMESLSVREKNL) shows a compositional bias: basic and acidic residues.

The protein localises to the membrane. The chain is Transmembrane protein 202 (TMEM202) from Homo sapiens (Human).